The primary structure comprises 200 residues: 3-isopropylmalate dehydratase small subunit (200 aa).

Belongs to the LeuD family. LeuD type 1 subfamily. As to quaternary structure, heterodimer of LeuC and LeuD.

It carries out the reaction (2R,3S)-3-isopropylmalate = (2S)-2-isopropylmalate. Its pathway is amino-acid biosynthesis; L-leucine biosynthesis; L-leucine from 3-methyl-2-oxobutanoate: step 2/4. Catalyzes the isomerization between 2-isopropylmalate and 3-isopropylmalate, via the formation of 2-isopropylmaleate. The protein is 3-isopropylmalate dehydratase small subunit of Yersinia pseudotuberculosis serotype O:1b (strain IP 31758).